A 445-amino-acid polypeptide reads, in one-letter code: Phosphoglucosamine mutase 1 (445 aa).

Serine 102 acts as the Phosphoserine intermediate in catalysis. 4 residues coordinate Mg(2+): serine 102, aspartate 241, aspartate 243, and aspartate 245. Phosphoserine is present on serine 102.

It belongs to the phosphohexose mutase family. Mg(2+) is required as a cofactor. Post-translationally, activated by phosphorylation.

The catalysed reaction is alpha-D-glucosamine 1-phosphate = D-glucosamine 6-phosphate. In terms of biological role, catalyzes the conversion of glucosamine-6-phosphate to glucosamine-1-phosphate. This chain is Phosphoglucosamine mutase 1, found in Shewanella frigidimarina (strain NCIMB 400).